The chain runs to 591 residues: Trihelix transcription factor PTL (591 aa).

The segment at 1–32 (MDQDQHPQYGIPELRQLMKGGGRTTTTTPSTS) is disordered. The Myb-like 1 domain maps to 118–177 (GRWPRQETLTLLEIRSRLDHKFKEANQKGPLWDEVSRIMSEEHGYQRSGKKCREKFENLY). Residues 380–410 (CSSPEERTNGNNEIRNNSETQNENGSDQTMT) are disordered. Polar residues predominate over residues 388 to 410 (NGNNEIRNNSETQNENGSDQTMT). A Myb-like 2 domain is found at 422-479 (WGEQEILKLMEIRTSMDSTFQEILGGCSDEFLWEEIAAKLIQLGFDQRSALLCKEKWE). The segment at 491-551 (QINKKRKDNS…SNANANANVT (61 aa)) is disordered. Polar residues predominate over residues 515–534 (IYNNRESGYNDNDPHQINEQ). The segment covering 535–551 (GNVGSSTSNANANANVT) has biased composition (low complexity).

Interacts with KIN10. As to expression, confined to flowers, at low levels. Also present in 7-days-old seedlings. Barely detectable in other tissues such as young seedlings, roots, stems, leaves and siliques. Expressed in flower primordia, more precisely between newly arisen sepal primordia and also at the basal margins of developing sepals.

The protein localises to the nucleus. Functionally, transcription factor that prevents growth. Regulates perianth architecture in flower, mostly in the second whorl, probably by suppressing growth between initiating sepals, ensuring that they remain separate, and by modulating organ shapes. Required for the establishment of auxin flux. The chain is Trihelix transcription factor PTL (PTL) from Arabidopsis thaliana (Mouse-ear cress).